The following is a 415-amino-acid chain: MMASDGHPGPPSVTPGSPLSAGGREWQGMAGSCWNITYVQDSVGPATSTLMFVAGVVGNGLALGILGARRRSHPSAFAVLVTGLAVTDLLGTCFLSPAVFVAYARNSSLLGLAHGGTMLCDTFAFAMTFFGLASTLILFAMAVERCLALSHPYLYAQLDGPRCARFALPSIYAFCCLFCSLPLLGLGEHQQYCPGSWCFIRMRSAQPGGCAFSLAYASLMALLVTSIFFCNGSVTLSLYHMYRQQRRHHGSFVPTSRAREDEVYHLILLALMTVIMAVCSLPLMIRGFTQAIAPDSREMGDLLAFRFNAFNPILDPWVFILFRKAVFQRLKFWLCCLCARSVHGDLQAPLSRPASGRRDPPAPTSLQAKEGSWVPLSSWGTGQVAPLTAVPLTGGDGCSVGMPSKSEAIAACSLC.

Residues 1–21 form a disordered region; sequence MMASDGHPGPPSVTPGSPLSA. Over 1–44 the chain is Extracellular; sequence MMASDGHPGPPSVTPGSPLSAGGREWQGMAGSCWNITYVQDSVG. Disulfide bonds link cysteine 33–cysteine 193 and cysteine 120–cysteine 198. Residue asparagine 35 is glycosylated (N-linked (GlcNAc...) asparagine). Residues 45 to 66 form a helical membrane-spanning segment; sequence PATSTLMFVAGVVGNGLALGIL. Residues 67–79 are Cytoplasmic-facing; the sequence is GARRRSHPSAFAV. Residues 80–104 form a helical membrane-spanning segment; the sequence is LVTGLAVTDLLGTCFLSPAVFVAYA. Over 105–122 the chain is Extracellular; sequence RNSSLLGLAHGGTMLCDT. Residues 123–143 form a helical membrane-spanning segment; that stretch reads FAFAMTFFGLASTLILFAMAV. Topologically, residues 144-162 are cytoplasmic; it reads ERCLALSHPYLYAQLDGPR. Residues 163–186 form a helical membrane-spanning segment; that stretch reads CARFALPSIYAFCCLFCSLPLLGL. Residues 187 to 215 lie on the Extracellular side of the membrane; sequence GEHQQYCPGSWCFIRMRSAQPGGCAFSLA. The helical transmembrane segment at 216 to 236 threads the bilayer; the sequence is YASLMALLVTSIFFCNGSVTL. Residues 237 to 263 are Cytoplasmic-facing; it reads SLYHMYRQQRRHHGSFVPTSRAREDEV. Residues 264-288 form a helical membrane-spanning segment; the sequence is YHLILLALMTVIMAVCSLPLMIRGF. The Extracellular segment spans residues 289 to 301; the sequence is TQAIAPDSREMGD. A helical membrane pass occupies residues 302–322; it reads LLAFRFNAFNPILDPWVFILF. Topologically, residues 323-415 are cytoplasmic; it reads RKAVFQRLKF…SEAIAACSLC (93 aa). The disordered stretch occupies residues 349–370; the sequence is PLSRPASGRRDPPAPTSLQAKE. Serine 365 is modified (phosphoserine). Cysteine 412 carries the post-translational modification Cysteine methyl ester. Cysteine 412 is lipidated: S-farnesyl cysteine. Positions 413 to 415 are cleaved as a propeptide — removed in mature form; that stretch reads SLC.

It belongs to the G-protein coupled receptor 1 family. In terms of assembly, interacts (non-isoprenylated C-terminus) with PDZK1. Isoprenylation does not influence ligand binding but is required for efficient coupling to the effectors adenylyl cyclase and phospholipase C.

The protein localises to the cell membrane. Receptor for prostacyclin (prostaglandin I2 or PGI2). The activity of this receptor is mediated by G(s) proteins which activate adenylate cyclase. The sequence is that of Prostacyclin receptor (Ptgir) from Mus musculus (Mouse).